The following is a 475-amino-acid chain: Ankyrin repeat, SAM and basic leucine zipper domain-containing protein 1 (475 aa).

The segment at M1–G24 is disordered. Residues S17, S18, and S20 each carry the phosphoserine modification. ANK repeat units follow at residues E45 to S74, Y78 to F107, D110 to V144, R148 to A177, N181 to L210, and D214 to G243. The region spanning S272–A334 is the SAM domain.

Interacts with DDX4, PIWIL1, RANBP9 and TDRD1.

It localises to the cytoplasm. Functionally, plays a central role during spermatogenesis by repressing transposable elements and preventing their mobilization, which is essential for the germline integrity. Acts via the piRNA metabolic process, which mediates the repression of transposable elements during meiosis by forming complexes composed of piRNAs and Piwi proteins and governs the methylation and subsequent repression of transposons. Its association with pi-bodies suggests a participation in the primary piRNAs metabolic process. Required prior to the pachytene stage to facilitate the production of multiple types of piRNAs, including those associated with repeats involved in the regulation of retrotransposons. May act by mediating protein-protein interactions during germ cell maturation. The sequence is that of Ankyrin repeat, SAM and basic leucine zipper domain-containing protein 1 (ASZ1) from Loxodonta africana (African elephant).